A 116-amino-acid polypeptide reads, in one-letter code: Ribosome-binding factor A (116 aa).

The protein belongs to the RbfA family. Monomer. Binds 30S ribosomal subunits, but not 50S ribosomal subunits or 70S ribosomes.

Its subcellular location is the cytoplasm. One of several proteins that assist in the late maturation steps of the functional core of the 30S ribosomal subunit. Associates with free 30S ribosomal subunits (but not with 30S subunits that are part of 70S ribosomes or polysomes). Required for efficient processing of 16S rRNA. May interact with the 5'-terminal helix region of 16S rRNA. This Streptococcus pneumoniae serotype 4 (strain ATCC BAA-334 / TIGR4) protein is Ribosome-binding factor A.